Reading from the N-terminus, the 104-residue chain is Co-chaperonin GroES 5 (104 aa).

Belongs to the GroES chaperonin family. As to quaternary structure, heptamer of 7 subunits arranged in a ring. Interacts with the chaperonin GroEL.

It localises to the cytoplasm. Together with the chaperonin GroEL, plays an essential role in assisting protein folding. The GroEL-GroES system forms a nano-cage that allows encapsulation of the non-native substrate proteins and provides a physical environment optimized to promote and accelerate protein folding. GroES binds to the apical surface of the GroEL ring, thereby capping the opening of the GroEL channel. The sequence is that of Co-chaperonin GroES 5 from Rhizobium meliloti (strain 1021) (Ensifer meliloti).